The following is a 275-amino-acid chain: Adenosylcobinamide-GDP ribazoletransferase (275 aa).

6 helical membrane-spanning segments follow: residues 53 to 73 (WFVF…TISL), 113 to 133 (VGSF…LGVS), 144 to 164 (LPFT…LYFV), 204 to 224 (FACI…PYFL), 225 to 245 (LSLL…KRWI), and 253 to 273 (LGAV…FVWI).

The protein belongs to the CobS family. Requires Mg(2+) as cofactor.

It localises to the cell inner membrane. It catalyses the reaction alpha-ribazole + adenosylcob(III)inamide-GDP = adenosylcob(III)alamin + GMP + H(+). The enzyme catalyses alpha-ribazole 5'-phosphate + adenosylcob(III)inamide-GDP = adenosylcob(III)alamin 5'-phosphate + GMP + H(+). It functions in the pathway cofactor biosynthesis; adenosylcobalamin biosynthesis; adenosylcobalamin from cob(II)yrinate a,c-diamide: step 7/7. Joins adenosylcobinamide-GDP and alpha-ribazole to generate adenosylcobalamin (Ado-cobalamin). Also synthesizes adenosylcobalamin 5'-phosphate from adenosylcobinamide-GDP and alpha-ribazole 5'-phosphate. The chain is Adenosylcobinamide-GDP ribazoletransferase from Leptospira biflexa serovar Patoc (strain Patoc 1 / Ames).